The sequence spans 297 residues: Adrenocorticotropic hormone receptor (297 aa).

The Extracellular segment spans residues 1–23 (MKHIINSYENINNTARNNSDCPR). N-linked (GlcNAc...) asparagine glycosylation is found at Asn-12 and Asn-17. 2 disulfide bridges follow: Cys-21-Cys-253 and Cys-245-Cys-251. A helical transmembrane segment spans residues 24–49 (VVLPEEIFFTISIVGVLENLIVLLAV). Over 50-58 (FKNKNLQAP) the chain is Cytoplasmic. Residues 59–79 (MYFFICSLAISDMLGSLYKIL) form a helical membrane-spanning segment. Residues 80 to 104 (ENILIILRNMGYLKPRGSFETTADD) are Extracellular-facing. Residues 105–126 (IIDSLFVLSLLGSIFSLSVIAA) form a helical membrane-spanning segment. Topologically, residues 127–147 (DRYITIFHALRYHSIVTMRRT) are cytoplasmic. The chain crosses the membrane as a helical span at residues 148–168 (VVVLTVIWTFCTGTGITMVIF). At 169–180 (SHHVPTVITFTS) the chain is on the extracellular side. The chain crosses the membrane as a helical span at residues 181-199 (LFPLMLVFILCLYVHMFLL). Residues 200–217 (ARSHTRKISTLPRANMKG) are Cytoplasmic-facing. A helical transmembrane segment spans residues 218–244 (AITLTILLGVFIFCWAPFVLHVLLMTF). Over 245 to 256 (CPSNPYCACYMS) the chain is Extracellular. The chain crosses the membrane as a helical span at residues 257–278 (LFQVNGMLIMCNAVIDPFIYAF). Residues 279–297 (RSPELRDAFKKMIFCSRYW) lie on the Cytoplasmic side of the membrane. The S-palmitoyl cysteine moiety is linked to residue Cys-293.

Belongs to the G-protein coupled receptor 1 family. As to quaternary structure, homodimer. Interacts with corticotropin (ACTH). Interacts with MRAP; this interaction targets MC2R to the plasma membrane. Interacts with MRAP2; competing with MRAP for binding to MC2R and impairing the binding of corticotropin (ACTH). Post-translationally, ubiquitinated by MGRN1 that may be involved in post-endocytic trafficking and/or degradation of internalized receptor. As to expression, melanocytes and corticoadrenal tissue.

The protein localises to the cell membrane. Hormone receptor primarily expressed in adrenal cortex that plays a key role in regulating adrenocortical function. Upon corticotropin (ACTH) binding, facilitates the release of adrenal glucocorticoids, including cortisol and corticosterone. In addition, MC2R is required for fetal and neonatal adrenal gland development. Mechanistically, activates adenylate cyclase (cAMP), the MAPK cascade as well as the cAMP-dependent protein kinase A pathway leading to steroidogenic factor 1/NR5A1-mediated transcriptional activation. The sequence is that of Adrenocorticotropic hormone receptor (MC2R) from Homo sapiens (Human).